The following is an 89-amino-acid chain: Small ribosomal subunit protein uS15 (89 aa).

Over residues 1–10 (MSITAEKKQE) the composition is skewed to basic and acidic residues. A disordered region spans residues 1 to 24 (MSITAEKKQEVIQSNARAEGDTGS).

The protein belongs to the universal ribosomal protein uS15 family. Part of the 30S ribosomal subunit. Forms a bridge to the 50S subunit in the 70S ribosome, contacting the 23S rRNA.

One of the primary rRNA binding proteins, it binds directly to 16S rRNA where it helps nucleate assembly of the platform of the 30S subunit by binding and bridging several RNA helices of the 16S rRNA. Functionally, forms an intersubunit bridge (bridge B4) with the 23S rRNA of the 50S subunit in the ribosome. The sequence is that of Small ribosomal subunit protein uS15 from Novosphingobium aromaticivorans (strain ATCC 700278 / DSM 12444 / CCUG 56034 / CIP 105152 / NBRC 16084 / F199).